The sequence spans 124 residues: Immunoglobulin lambda variable 5-52 (124 aa).

The N-terminal stretch at 1–19 is a signal peptide; that stretch reads MAWTLLLLVLLSHCTGSLS. The interval 20 to 44 is framework-1; it reads QPVLTQPSSHSASSGASVRLTCMLS. The 104-residue stretch at 21–124 folds into the Ig-like domain; it reads PVLTQPSSHS…CGTWHSNSKT (104 aa). A disulfide bridge links Cys41 with Cys115. The segment at 45-53 is complementarity-determining-1; that stretch reads SGFSVGDFW. The segment at 54 to 70 is framework-2; that stretch reads IRWYQQKPGNPPRYLLY. Residues 71-77 form a complementarity-determining-2 region; the sequence is YHSDSNK. Positions 78–115 are framework-3; the sequence is GQGSGVPSRFSGSNDASANAGILRISGLQPEDEADYYC. The interval 116 to 124 is complementarity-determining-3; it reads GTWHSNSKT.

Immunoglobulins are composed of two identical heavy chains and two identical light chains; disulfide-linked.

It is found in the secreted. The protein resides in the cell membrane. V region of the variable domain of immunoglobulin light chains that participates in the antigen recognition. Immunoglobulins, also known as antibodies, are membrane-bound or secreted glycoproteins produced by B lymphocytes. In the recognition phase of humoral immunity, the membrane-bound immunoglobulins serve as receptors which, upon binding of a specific antigen, trigger the clonal expansion and differentiation of B lymphocytes into immunoglobulins-secreting plasma cells. Secreted immunoglobulins mediate the effector phase of humoral immunity, which results in the elimination of bound antigens. The antigen binding site is formed by the variable domain of one heavy chain, together with that of its associated light chain. Thus, each immunoglobulin has two antigen binding sites with remarkable affinity for a particular antigen. The variable domains are assembled by a process called V-(D)-J rearrangement and can then be subjected to somatic hypermutations which, after exposure to antigen and selection, allow affinity maturation for a particular antigen. The protein is Immunoglobulin lambda variable 5-52 of Homo sapiens (Human).